Consider the following 211-residue polypeptide: FMN-dependent NADH:quinone oxidoreductase 2 (211 aa).

FMN-binding positions include Ser-10 and 17-19 (SRS).

Belongs to the azoreductase type 1 family. As to quaternary structure, homodimer. FMN is required as a cofactor.

The catalysed reaction is 2 a quinone + NADH + H(+) = 2 a 1,4-benzosemiquinone + NAD(+). It catalyses the reaction N,N-dimethyl-1,4-phenylenediamine + anthranilate + 2 NAD(+) = 2-(4-dimethylaminophenyl)diazenylbenzoate + 2 NADH + 2 H(+). Its function is as follows. Quinone reductase that provides resistance to thiol-specific stress caused by electrophilic quinones. Also exhibits azoreductase activity. Catalyzes the reductive cleavage of the azo bond in aromatic azo compounds to the corresponding amines. This chain is FMN-dependent NADH:quinone oxidoreductase 2, found in Listeria monocytogenes serotype 4b (strain F2365).